We begin with the raw amino-acid sequence, 158 residues long: Transcription elongation factor GreB (158 aa).

Positions 53 to 75 form a coiled coil; the sequence is KRRLREIDRRVRFLTKRLEVLQI.

Belongs to the GreA/GreB family. GreB subfamily.

Necessary for efficient RNA polymerase transcription elongation past template-encoded arresting sites. The arresting sites in DNA have the property of trapping a certain fraction of elongating RNA polymerases that pass through, resulting in locked ternary complexes. Cleavage of the nascent transcript by cleavage factors such as GreA or GreB allows the resumption of elongation from the new 3'terminus. GreB releases sequences of up to 9 nucleotides in length. The polypeptide is Transcription elongation factor GreB (Haemophilus influenzae (strain ATCC 51907 / DSM 11121 / KW20 / Rd)).